The sequence spans 490 residues: Kinetochore protein Nuf2 homolog (490 aa).

2 coiled-coil regions span residues 146-280 and 310-407; these read DRKF…KLEA and DLID…SETI. Disordered regions lie at residues 346–365 and 468–490; these read QSET…EERQ and IDAG…SVFK.

The protein belongs to the NUF2 family. As to quaternary structure, component of the NDC80 complex, which is composed of at least ndc-80 and him-10. The NDC80 complex interacts with knl-1.

The protein localises to the nucleus. It is found in the chromosome. It localises to the centromere. Its subcellular location is the kinetochore. Its function is as follows. Acts as a component of the essential kinetochore-associated NDC80 complex, which is required for chromosome segregation in mitosis and meiosis and spindle checkpoint activity. The ndc-80 complex synergistically enhances the affinity of the ska-1 complex for microtubules and may allow the ndc-80 complex to track depolymerizing microtubules. The sequence is that of Kinetochore protein Nuf2 homolog (him-10) from Caenorhabditis elegans.